We begin with the raw amino-acid sequence, 410 residues long: Ribosomal protein S6 kinase-related protein (410 aa).

Residues 107 to 274 enclose the Protein kinase domain; sequence LKILGLVAKG…GTLQYMAPEV (168 aa). ATP-binding positions include 113–121 and lysine 136; that span reads VAKGSFGTV. Catalysis depends on aspartate 229, which acts as the Proton acceptor.

This sequence belongs to the protein kinase superfamily. Ser/Thr protein kinase family.

It catalyses the reaction L-seryl-[protein] + ATP = O-phospho-L-seryl-[protein] + ADP + H(+). The enzyme catalyses L-threonyl-[protein] + ATP = O-phospho-L-threonyl-[protein] + ADP + H(+). The polypeptide is Ribosomal protein S6 kinase-related protein (Homo sapiens (Human)).